We begin with the raw amino-acid sequence, 163 residues long: Seed allergenic protein RAG1 (163 aa).

The signal sequence occupies residues 1 to 27 (MASNKVVFSVLLLVVLSVLAAAMATMA). Disulfide bonds link Cys-39/Cys-90, Cys-53/Cys-78, Cys-61/Cys-122, Cys-79/Cys-138, and Cys-92/Cys-150.

Belongs to the cereal trypsin/alpha-amylase inhibitor family. Post-translationally, five disulfide bonds are present.

It is found in the secreted. Functionally, seed storage protein. The polypeptide is Seed allergenic protein RAG1 (RAG1) (Oryza sativa subsp. japonica (Rice)).